The primary structure comprises 371 residues: tRNA-specific 2-thiouridylase MnmA (371 aa).

ATP-binding positions include 13–20 and M39; that span reads GMSGGVDS. Residues 99 to 101 form an interaction with target base in tRNA region; it reads NPD. The active-site Nucleophile is the C104. A disulfide bridge links C104 with C200. An ATP-binding site is contributed by G128. Positions 150–152 are interaction with tRNA; that stretch reads KDQ. C200 functions as the Cysteine persulfide intermediate in the catalytic mechanism. The interval 308-309 is interaction with tRNA; that stretch reads RY.

Belongs to the MnmA/TRMU family.

Its subcellular location is the cytoplasm. It catalyses the reaction S-sulfanyl-L-cysteinyl-[protein] + uridine(34) in tRNA + AH2 + ATP = 2-thiouridine(34) in tRNA + L-cysteinyl-[protein] + A + AMP + diphosphate + H(+). In terms of biological role, catalyzes the 2-thiolation of uridine at the wobble position (U34) of tRNA, leading to the formation of s(2)U34. This chain is tRNA-specific 2-thiouridylase MnmA, found in Bacillus cereus (strain ATCC 10987 / NRS 248).